We begin with the raw amino-acid sequence, 259 residues long: Probable ABC transporter permease protein RC0129 (259 aa).

A run of 5 helical transmembrane segments spans residues Thr13 to Ile35, Leu49 to Val69, Val148 to Met168, Pro195 to Ile215, and Ala237 to Phe257.

This sequence belongs to the MlaE permease family.

It localises to the cell inner membrane. Its function is as follows. Could be part of an ABC transporter complex. The sequence is that of Probable ABC transporter permease protein RC0129 from Rickettsia conorii (strain ATCC VR-613 / Malish 7).